A 329-amino-acid chain; its full sequence is Octaprenyl diphosphate synthase (329 aa).

Isopentenyl diphosphate contacts are provided by lysine 51, arginine 54, and histidine 83. Mg(2+)-binding residues include aspartate 90 and aspartate 94. Residue arginine 99 coordinates an all-trans-polyprenyl diphosphate. An isopentenyl diphosphate-binding site is contributed by arginine 100. An all-trans-polyprenyl diphosphate-binding residues include lysine 176, threonine 177, and glutamine 214.

The protein belongs to the FPP/GGPP synthase family. Mg(2+) serves as cofactor.

It carries out the reaction 5 isopentenyl diphosphate + (2E,6E)-farnesyl diphosphate = all-trans-octaprenyl diphosphate + 5 diphosphate. Supplies octaprenyl diphosphate, the precursor for the side chain of the isoprenoid quinones ubiquinone and menaquinone. This chain is Octaprenyl diphosphate synthase (ispB), found in Haemophilus influenzae (strain ATCC 51907 / DSM 11121 / KW20 / Rd).